A 143-amino-acid chain; its full sequence is Transcriptional regulator MraZ (143 aa).

2 SpoVT-AbrB domains span residues 5 to 47 and 76 to 119; these read EYLH…PLDE and ATEC…SQAL.

It belongs to the MraZ family. Forms oligomers.

It is found in the cytoplasm. The protein localises to the nucleoid. This chain is Transcriptional regulator MraZ, found in Desulfitobacterium hafniense (strain Y51).